A 78-amino-acid chain; its full sequence is Putative membrane protein insertion efficiency factor (78 aa).

This sequence belongs to the UPF0161 family.

The protein resides in the cell inner membrane. In terms of biological role, could be involved in insertion of integral membrane proteins into the membrane. The chain is Putative membrane protein insertion efficiency factor from Thiobacillus denitrificans (strain ATCC 25259 / T1).